The sequence spans 1019 residues: Type VI secretion system spike protein VgrG2b (1019 aa).

Residues 268-291 (AGRPFTESRLRGHRRDARVASVSG) form a disordered region. His-935 is a binding site for Zn(2+). The active site involves Glu-936. The Zn(2+) site is built by His-939 and Glu-983.

This sequence belongs to the VgrG protein family. As to quaternary structure, interacts with Tla3; this interaction promotes Tle3 loading onto VgrG2b. Interacts with host gamma-tubulin ring complex components GCP1 and GCP4. Zn(2+) is required as a cofactor.

The protein localises to the secreted. Part of the H2 type VI secretion system (H2-T6SS) specialized secretion system, which delivers several virulence factors in both prokaryotic and eukaryotic cells during infection. Forms the spike at the tip of the elongating tube probably formed by haemolysin co-regulated protein 2b/Hcp2b. Allows the delivery of the Tle3 antibacterial toxin to target cells where it exerts its toxicity. Additionally, acts directly as an effector and promotes internalization by interacting with the host gamma-tubulin ring complex. Elicits toxicity also in the bacterial periplasm and disrupts bacterial cell morphology. Toxicity is counteracted by a cognate immunity protein. The sequence is that of Type VI secretion system spike protein VgrG2b (vgrG2b) from Pseudomonas aeruginosa (strain ATCC 15692 / DSM 22644 / CIP 104116 / JCM 14847 / LMG 12228 / 1C / PRS 101 / PAO1).